Consider the following 312-residue polypeptide: Thioredoxin reductase (312 aa).

An FAD-binding site is contributed by 33–43; the sequence is EGFFSGIAGGQ. Cysteine 138 and cysteine 141 are joined by a disulfide. 283–292 contacts FAD; that stretch reads DVQDKYYRQA.

The protein belongs to the class-II pyridine nucleotide-disulfide oxidoreductase family. Homodimer. It depends on FAD as a cofactor.

The protein resides in the cytoplasm. The enzyme catalyses [thioredoxin]-dithiol + NADP(+) = [thioredoxin]-disulfide + NADPH + H(+). The chain is Thioredoxin reductase (trxB) from Chlamydia trachomatis serovar D (strain ATCC VR-885 / DSM 19411 / UW-3/Cx).